The following is a 421-amino-acid chain: MLLYYILVALWATVTYAKSFSEDISEMPELSEMSSYLNQTPEAKDVLDQQKNVTLLALENSAFRDFVGQGEGNDNQSSSNSSLLRGIFSYQLVKGLHNSEQITTTPQFSPTELNDAGFTNVSSGQIVQLVEKDGKDYAISGLNDNSTIIKPGVDVENGVIHVIDRPLTLPQSVTATLQAANLTSFQGALQRGNAVSNANDPKDITLFAPRNLGFQRIGTAFENISAEDLGQIANYHIVKGKVLYSPDLTDADHPTYADKDLHISTVDGRSYVNSARVESTNLLVNNGVIHVISDVLNPNNDTAKPVPNADPPPPAFENANPVSTDPLTDGIPSPTSVIPLPGITSGGEGGGGGGGESTAPPSPTATVTETQSGGGGGGGGGAGGGPGPTATNTPQPGAAATERAKAGLAAVVGLGVVLINA.

A signal peptide spans 1 to 17 (MLLYYILVALWATVTYA). FAS1 domains lie at 18 to 167 (KSFS…DRPL) and 169 to 296 (LPQS…SDVL). Residues asparagine 52, asparagine 75, asparagine 80, asparagine 120, asparagine 145, asparagine 181, asparagine 223, and asparagine 300 are each glycosylated (N-linked (GlcNAc...) asparagine). The segment at 300–401 (NDTAKPVPNA…NTPQPGAAAT (102 aa)) is disordered. Gly residues-rich tracts occupy residues 344-356 (TSGG…GGGE) and 372-387 (SGGG…GGPG). Over residues 388–401 (PTATNTPQPGAAAT) the composition is skewed to low complexity. Glycine 397 carries GPI-anchor amidated glycine lipidation. Residues 398 to 421 (AAATERAKAGLAAVVGLGVVLINA) constitute a propeptide, removed in mature form.

It belongs to the fasciclin-like AGP family.

The protein localises to the cell membrane. May be a cell surface adhesion protein. The protein is Fasciclin-like arabinogalactan protein ARB_02922 of Arthroderma benhamiae (strain ATCC MYA-4681 / CBS 112371) (Trichophyton mentagrophytes).